The following is an 834-amino-acid chain: Glycerol-3-phosphate acyltransferase (834 aa).

Positions 309–314 match the HXXXXD motif motif; sequence CHRSHI.

It belongs to the GPAT/DAPAT family.

It localises to the cell inner membrane. The catalysed reaction is sn-glycerol 3-phosphate + an acyl-CoA = a 1-acyl-sn-glycero-3-phosphate + CoA. It functions in the pathway phospholipid metabolism; CDP-diacylglycerol biosynthesis; CDP-diacylglycerol from sn-glycerol 3-phosphate: step 1/3. The polypeptide is Glycerol-3-phosphate acyltransferase (Pseudomonas paraeruginosa (strain DSM 24068 / PA7) (Pseudomonas aeruginosa (strain PA7))).